A 217-amino-acid chain; its full sequence is Putative peroxiredoxin Q, chloroplastic (217 aa).

Residues 1 to 66 (MAFAVSTACR…PSTTGRNRIV (66 aa)) constitute a chloroplast transit peptide. Residues 70-217 (VSKGSAAPNF…GETLKILQSL (148 aa)) form the Thioredoxin domain. Residue Cys-112 is the Cysteine sulfenic acid (-SOH) intermediate of the active site. The cysteines at positions 112 and 117 are disulfide-linked.

The protein belongs to the peroxiredoxin family. BCP/PrxQ subfamily. Monomer.

The protein localises to the plastid. Its subcellular location is the chloroplast thylakoid lumen. It carries out the reaction a hydroperoxide + [thioredoxin]-dithiol = an alcohol + [thioredoxin]-disulfide + H2O. Functionally, thiol-specific peroxidase that catalyzes the reduction of hydrogen peroxide and organic hydroperoxides to water and alcohols, respectively. Plays a role in cell protection against oxidative stress by detoxifying peroxides. This Oryza sativa subsp. indica (Rice) protein is Putative peroxiredoxin Q, chloroplastic.